We begin with the raw amino-acid sequence, 422 residues long: Serpin A11 (422 aa).

The N-terminal stretch at Met1–Ala24 is a signal peptide. The interval His25–Pro45 is disordered. Asn106, Asn169, Asn350, and Asn385 each carry an N-linked (GlcNAc...) asparagine glycan.

This sequence belongs to the serpin family.

The protein resides in the secreted. The sequence is that of Serpin A11 (Serpina11) from Rattus norvegicus (Rat).